We begin with the raw amino-acid sequence, 493 residues long: Glutamyl-tRNA(Gln) amidotransferase subunit A (493 aa).

Residues Lys-79 and Ser-159 each act as charge relay system in the active site. Ser-183 functions as the Acyl-ester intermediate in the catalytic mechanism.

It belongs to the amidase family. GatA subfamily. In terms of assembly, heterotrimer of A, B and C subunits.

It catalyses the reaction L-glutamyl-tRNA(Gln) + L-glutamine + ATP + H2O = L-glutaminyl-tRNA(Gln) + L-glutamate + ADP + phosphate + H(+). In terms of biological role, allows the formation of correctly charged Gln-tRNA(Gln) through the transamidation of misacylated Glu-tRNA(Gln) in organisms which lack glutaminyl-tRNA synthetase. The reaction takes place in the presence of glutamine and ATP through an activated gamma-phospho-Glu-tRNA(Gln). This Sinorhizobium medicae (strain WSM419) (Ensifer medicae) protein is Glutamyl-tRNA(Gln) amidotransferase subunit A.